A 953-amino-acid chain; its full sequence is MNNKKTATNRKGMIPNRLNKFSIRKYSVGTASILVGTTLIFGLSGHEAKAAEHTNGELNQSKNETTAPSENKTTEKVDSRQLKDNTQTATADQPKVTMSDSATVKETSSNMQSPQNATASQSTTQTSNVTTNDKSSTTYSNETDKSNLTQAKNVSTTPKTTTIKQRALNRMAVNTVAAPQQGTNVNDKVHFTNIDIAIDKGHVNKTTGNTEFWATSSDVLKLKANYTIDDSVKEGDTFTFKYGQYFRPGSVRLPSQTQNLYNAQGNIIAKGIYDSKTNTTTYTFTNYVDQYTNVSGSFEQVAFAKRENATTDKTAYKMEVTLGNDTYSKDVIVDYGNQKGQQLISSTNYINNEDLSRNMTVYVNQPKKTYTKETFVTNLTGYKFNPDAKNFKIYEVTDQNQFVDSFTPDTSKLKDVTGQFDVIYSNDNKTATVDLLNGQSSSDKQYIIQQVAYPDNSSTDNGKIDYTLETQNGKSSWSNSYSNVNGSSTANGDQKKYNLGDYVWEDTNKDGKQDANEKGIKGVYVILKDSNGKELDRTTTDENGKYQFTGLSNGTYSVEFSTPAGYTPTTANAGTDDAVDSDGLTTTGVIKDADNMTLDSGFYKTPKYSLGDYVWYDSNKDGKQDSTEKGIKGVKVTLQNEKGEVIGTTETDENGKYRFDNLDSGKYKVIFEKPAGLTQTGTNTTEDDKDADGGEVDVTITDHDDFTLDNGYYEEETSDSDSDSDSDSDSDSDSDSDSDSDSDSDSDSDSDSDSDSDSDSDSDSDSDSDSDSESDSDSDSDSDSDSDSDSDSDSDSDSDSDSDSDSDSDSDSDSDSDSDSDSDNDSDSDSDSDSDSDSDSDSDSDSDSDSDSDSDSDSDSDSDSDSDSDSDSDSDSDSDSDSDSDSDSDSDSDAGKHTPTKPMSTVKDQHKTAKALPETGSENNNSNNGTLFGGLFAALGSLLLFGRRKKQNK.

An N-terminal signal peptide occupies residues 1-50; sequence MNNKKTATNRKGMIPNRLNKFSIRKYSVGTASILVGTTLIFGLSGHEAKA. Positions 51-160 are disordered; it reads AEHTNGELNQ…AKNVSTTPKT (110 aa). A ligand binding A region region spans residues 51–495; it reads AEHTNGELNQ…GSSTANGDQK (445 aa). Residues 56 to 71 are compositionally biased toward polar residues; it reads GELNQSKNETTAPSEN. The segment covering 72–83 has biased composition (basic and acidic residues); the sequence is KTTEKVDSRQLK. Polar residues predominate over residues 84–114; that stretch reads DNTQTATADQPKVTMSDSATVKETSSNMQSP. Low complexity predominate over residues 115 to 132; it reads QNATASQSTTQTSNVTTN. Over residues 133-160 the composition is skewed to polar residues; that stretch reads DKSSTTYSNETDKSNLTQAKNVSTTPKT. CNA-B domains follow at residues 496 to 606 and 607 to 717; these read KYNL…YKTP and KYSL…EEET. The interval 678–933 is disordered; it reads TQTGTNTTED…NNSNNGTLFG (256 aa). Acidic residues-rich tracts occupy residues 685–695 and 712–892; these read TEDDKDADGGE and YYEE…DSDS. Residues 916-920 carry the LPXTG sorting signal motif; sequence LPETG. Positions 918–933 are enriched in low complexity; sequence ETGSENNNSNNGTLFG. Threonine 919 bears the Pentaglycyl murein peptidoglycan amidated threonine mark. The propeptide at 920–953 is removed by sortase; sequence GSENNNSNNGTLFGGLFAALGSLLLFGRRKKQNK.

This sequence belongs to the serine-aspartate repeat-containing protein (SDr) family. In terms of assembly, homodimerizes; via N2-Domain. Interacts with host NRXN1; this interaction mediates bacterial attachment to host cells.

The protein localises to the secreted. It is found in the cell wall. Its function is as follows. Cell surface-associated calcium-binding protein which plays an important role in adhesion and pathogenesis. Mediates interactions with components of the extracellular matrix such as host NRXN1 to promote bacterial adhesion. This chain is Serine-aspartate repeat-containing protein C (sdrC), found in Staphylococcus aureus (strain Mu50 / ATCC 700699).